Reading from the N-terminus, the 376-residue chain is Phosphate-binding protein (376 aa).

Intrachain disulfides connect Cys113–Cys158 and Cys306–Cys369.

As to quaternary structure, heterooligomer with human PON1. In terms of tissue distribution, found in human plasma.

It localises to the secreted. Phosphate-binding protein. The polypeptide is Phosphate-binding protein (Unknown prokaryotic organism).